A 295-amino-acid polypeptide reads, in one-letter code: Aspartate carbamoyltransferase catalytic subunit (295 aa).

The carbamoyl phosphate site is built by R49 and T50. K77 serves as a coordination point for L-aspartate. Carbamoyl phosphate-binding residues include R99, H127, and Q130. Residues R161 and R212 each coordinate L-aspartate. 2 residues coordinate carbamoyl phosphate: G251 and P252.

This sequence belongs to the aspartate/ornithine carbamoyltransferase superfamily. ATCase family. As to quaternary structure, heterododecamer (2C3:3R2) of six catalytic PyrB chains organized as two trimers (C3), and six regulatory PyrI chains organized as three dimers (R2).

It catalyses the reaction carbamoyl phosphate + L-aspartate = N-carbamoyl-L-aspartate + phosphate + H(+). The protein operates within pyrimidine metabolism; UMP biosynthesis via de novo pathway; (S)-dihydroorotate from bicarbonate: step 2/3. In terms of biological role, catalyzes the condensation of carbamoyl phosphate and aspartate to form carbamoyl aspartate and inorganic phosphate, the committed step in the de novo pyrimidine nucleotide biosynthesis pathway. In Aliarcobacter butzleri (strain RM4018) (Arcobacter butzleri), this protein is Aspartate carbamoyltransferase catalytic subunit.